The chain runs to 504 residues: Glycerol kinase (504 aa).

Thr-14 provides a ligand contact to ADP. Residues Thr-14, Thr-15, and Ser-16 each coordinate ATP. Thr-14 provides a ligand contact to sn-glycerol 3-phosphate. Residue Arg-18 coordinates ADP. Sn-glycerol 3-phosphate-binding residues include Arg-84, Glu-85, Tyr-136, and Asp-246. Glycerol contacts are provided by Arg-84, Glu-85, Tyr-136, Asp-246, and Gln-247. ADP-binding residues include Thr-268 and Gly-311. ATP-binding residues include Thr-268, Gly-311, Gln-315, and Gly-412. Residues Gly-412 and Asn-416 each contribute to the ADP site.

The protein belongs to the FGGY kinase family.

It carries out the reaction glycerol + ATP = sn-glycerol 3-phosphate + ADP + H(+). Its pathway is polyol metabolism; glycerol degradation via glycerol kinase pathway; sn-glycerol 3-phosphate from glycerol: step 1/1. With respect to regulation, inhibited by fructose 1,6-bisphosphate (FBP). Its function is as follows. Key enzyme in the regulation of glycerol uptake and metabolism. Catalyzes the phosphorylation of glycerol to yield sn-glycerol 3-phosphate. In Aliivibrio fischeri (strain MJ11) (Vibrio fischeri), this protein is Glycerol kinase.